A 240-amino-acid polypeptide reads, in one-letter code: MKIDILTLFPEMFAPLEHSIVGKAREKGLLEINYHNFRENAEKSRHVDDEPYGGGQGMLLRAQPIFDAYDDIEKKQPRVILLDPAGRTFDQAYAEELAKEEELIFICGHYEGYDERIKTLVTDEISLGDYILTGGELAAMTMIDATVRLIPEVIGKEASHTDDSFSSGLLEYPQYTRPYDYRGMVVPEVLMSGHHENIRKWRLYESLKKTYLRRPDLLKHYEMTVEEEAMLEEIRHAHSD.

Residues Gly-108 and 127–132 (LGDYIL) each bind S-adenosyl-L-methionine.

Belongs to the RNA methyltransferase TrmD family. In terms of assembly, homodimer.

It localises to the cytoplasm. The catalysed reaction is guanosine(37) in tRNA + S-adenosyl-L-methionine = N(1)-methylguanosine(37) in tRNA + S-adenosyl-L-homocysteine + H(+). In terms of biological role, specifically methylates guanosine-37 in various tRNAs. The polypeptide is tRNA (guanine-N(1)-)-methyltransferase (Streptococcus sanguinis (strain SK36)).